The chain runs to 399 residues: Nuclear hormone receptor family member nhr-125 (399 aa).

The nuclear receptor DNA-binding region spans 10–80 (PFSCRICNQK…MGMDTTKFQY (71 aa)). 2 consecutive NR C4-type zinc fingers follow at residues 13–33 (CRIC…CRAC) and 50–63 (CQKG…CKRC). The 244-residue stretch at 149–392 (QLENLTEGFK…EKLQKSQFSI (244 aa)) folds into the NR LBD domain.

Belongs to the nuclear hormone receptor family.

It localises to the nucleus. In terms of biological role, orphan nuclear receptor. This Caenorhabditis elegans protein is Nuclear hormone receptor family member nhr-125 (nhr-125).